Consider the following 260-residue polypeptide: Indole-3-glycerol phosphate synthase (260 aa).

This sequence belongs to the TrpC family.

It catalyses the reaction 1-(2-carboxyphenylamino)-1-deoxy-D-ribulose 5-phosphate + H(+) = (1S,2R)-1-C-(indol-3-yl)glycerol 3-phosphate + CO2 + H2O. The protein operates within amino-acid biosynthesis; L-tryptophan biosynthesis; L-tryptophan from chorismate: step 4/5. The protein is Indole-3-glycerol phosphate synthase of Bacteroides thetaiotaomicron (strain ATCC 29148 / DSM 2079 / JCM 5827 / CCUG 10774 / NCTC 10582 / VPI-5482 / E50).